A 185-amino-acid chain; its full sequence is Pyruvate/ketoisovalerate oxidoreductases common subunit gamma (185 aa).

As to quaternary structure, heterotetramer of one alpha, one beta, one delta and one gamma chain.

The catalysed reaction is 2 oxidized [2Fe-2S]-[ferredoxin] + pyruvate + CoA = 2 reduced [2Fe-2S]-[ferredoxin] + acetyl-CoA + CO2 + H(+). It carries out the reaction 3-methyl-2-oxobutanoate + 2 oxidized [2Fe-2S]-[ferredoxin] + CoA = 2-methylpropanoyl-CoA + 2 reduced [2Fe-2S]-[ferredoxin] + CO2 + H(+). The polypeptide is Pyruvate/ketoisovalerate oxidoreductases common subunit gamma (porG) (Thermococcus litoralis (strain ATCC 51850 / DSM 5473 / JCM 8560 / NS-C)).